The sequence spans 66 residues: Toxin Os1 (66 aa).

The region spanning 2 to 66 is the LCN-type CS-alpha/beta domain; the sequence is RDGYIVQLHN…PIKWLDPKCY (65 aa). 4 disulfides stabilise this stretch: Cys12–Cys65, Cys16–Cys37, Cys22–Cys47, and Cys26–Cys49.

The protein belongs to the long (4 C-C) scorpion toxin superfamily. Sodium channel inhibitor family. Alpha subfamily. In terms of tissue distribution, expressed by the venom gland.

It is found in the secreted. Functionally, alpha toxins bind voltage-independently at site-3 of sodium channels (Nav) and inhibit the inactivation of the activated channels, thereby blocking neuronal transmission. This toxin possesses a high paralytic activity against mice. The protein is Toxin Os1 of Orthochirus scrobiculosus (Central Asian scorpion).